Here is a 323-residue protein sequence, read N- to C-terminus: tRNA U34 carboxymethyltransferase (323 aa).

Carboxy-S-adenosyl-L-methionine is bound by residues Lys-91, Trp-105, Lys-110, Gly-130, 152–154 (DPT), 181–182 (IE), Met-196, Tyr-200, and Arg-315.

It belongs to the class I-like SAM-binding methyltransferase superfamily. CmoB family. Homotetramer.

The enzyme catalyses carboxy-S-adenosyl-L-methionine + 5-hydroxyuridine(34) in tRNA = 5-carboxymethoxyuridine(34) in tRNA + S-adenosyl-L-homocysteine + H(+). Its function is as follows. Catalyzes carboxymethyl transfer from carboxy-S-adenosyl-L-methionine (Cx-SAM) to 5-hydroxyuridine (ho5U) to form 5-carboxymethoxyuridine (cmo5U) at position 34 in tRNAs. The chain is tRNA U34 carboxymethyltransferase from Salmonella typhi.